The following is a 457-amino-acid chain: uncharacterized protein (457 aa).

The next 14 helical transmembrane spans lie at 15–35, 54–74, 87–107, 112–132, 144–164, 166–186, 205–225, 229–249, 269–289, 308–328, 334–354, 357–377, 400–420, and 428–448; these read YGAILTIVIGISMAVLDGAIA, IWVVNAYQIAIVISLLSFSFL, GLVVFLLSSLFCALSDSLQML, VIQGFGGAALMSVNTALIRLI, INSFIVAVSSAAGPTIAAAIL, IASWKWLFLINVPLGIIALLL, LPSAVMNALTFGLLITALSGF, QSLTLIAAELVVMVVVGIFFI, LFSLSICTSVCSFCAQMLAMV, LLLTPWPLATMVMAPLAGYLI, GLLGALGLFIMAAGLFSLVLL, SPADINIIWPMILCGAGFGLF, MLGTARLLGQSSGAALVALML, and THVSLMAAAILAVIAACVSGL.

The protein belongs to the major facilitator superfamily. TCR/Tet family.

The protein resides in the cell inner membrane. This is an uncharacterized protein from Escherichia coli (strain K12).